The chain runs to 249 residues: Ribonuclease PH (249 aa).

Phosphate is bound by residues arginine 86 and glycine 124–arginine 126.

The protein belongs to the RNase PH family. Homohexameric ring arranged as a trimer of dimers.

It carries out the reaction tRNA(n+1) + phosphate = tRNA(n) + a ribonucleoside 5'-diphosphate. Functionally, phosphorolytic 3'-5' exoribonuclease that plays an important role in tRNA 3'-end maturation. Removes nucleotide residues following the 3'-CCA terminus of tRNAs; can also add nucleotides to the ends of RNA molecules by using nucleoside diphosphates as substrates, but this may not be physiologically important. Probably plays a role in initiation of 16S rRNA degradation (leading to ribosome degradation) during starvation. The protein is Ribonuclease PH of Clostridium botulinum (strain Alaska E43 / Type E3).